The sequence spans 206 residues: Large ribosomal subunit protein uL4 (206 aa).

It belongs to the universal ribosomal protein uL4 family. As to quaternary structure, part of the 50S ribosomal subunit.

One of the primary rRNA binding proteins, this protein initially binds near the 5'-end of the 23S rRNA. It is important during the early stages of 50S assembly. It makes multiple contacts with different domains of the 23S rRNA in the assembled 50S subunit and ribosome. Functionally, forms part of the polypeptide exit tunnel. The polypeptide is Large ribosomal subunit protein uL4 (Methylorubrum populi (strain ATCC BAA-705 / NCIMB 13946 / BJ001) (Methylobacterium populi)).